The chain runs to 350 residues: Methylthioribose-1-phosphate isomerase (350 aa).

Aspartate 241 (proton donor) is an active-site residue.

It belongs to the eIF-2B alpha/beta/delta subunits family. MtnA subfamily.

The protein localises to the cytoplasm. It localises to the nucleus. The catalysed reaction is 5-(methylsulfanyl)-alpha-D-ribose 1-phosphate = 5-(methylsulfanyl)-D-ribulose 1-phosphate. Its pathway is amino-acid biosynthesis; L-methionine biosynthesis via salvage pathway; L-methionine from S-methyl-5-thio-alpha-D-ribose 1-phosphate: step 1/6. Its function is as follows. Catalyzes the interconversion of methylthioribose-1-phosphate (MTR-1-P) into methylthioribulose-1-phosphate (MTRu-1-P). This chain is Methylthioribose-1-phosphate isomerase, found in Nematostella vectensis (Starlet sea anemone).